The sequence spans 182 residues: Large ribosomal subunit protein uL16 (182 aa).

Belongs to the universal ribosomal protein uL16 family. Part of the 50S ribosomal subunit.

The sequence is that of Large ribosomal subunit protein uL16 from Thermococcus kodakarensis (strain ATCC BAA-918 / JCM 12380 / KOD1) (Pyrococcus kodakaraensis (strain KOD1)).